A 104-amino-acid chain; its full sequence is Integration host factor subunit alpha (104 aa).

The segment at Gly51–Glu70 is disordered.

Belongs to the bacterial histone-like protein family. As to quaternary structure, heterodimer of an alpha and a beta chain.

In terms of biological role, this protein is one of the two subunits of integration host factor, a specific DNA-binding protein that functions in genetic recombination as well as in transcriptional and translational control. This is Integration host factor subunit alpha from Ralstonia nicotianae (strain ATCC BAA-1114 / GMI1000) (Ralstonia solanacearum).